Reading from the N-terminus, the 441-residue chain is MSNVTHQPKIGFVSLGCPKNLVDSERILTELRTEGYDVVPHYDDADMVIVNTCGFIDSAVQESLEAIGEALNENGKVIVTGCLGAKEDQIREVHPKVLEITGPHSYEQVLQHVHHYVPKPKHNPFLSLVPEQGVKLTPRHYAYLKISEGCNHRCTFCIIPSMRGDLVSRPIGDVLSEAKRLVDAGVKEILVISQDTSAYGVDVKHRTGFHNGEPMKTSMVSLCEQLSKLGVWTRLHYVYPYPHVDDVIPLMAEGKILPYLDIPLQHASPRILKLMKRPGSVDRQLARIKQWREICPELTLRSTFIVGFPGETEEDFQMLLDFLKEARLDRVGCFKYSPVEGAGANELPDQVPEEVKEERWNRFMQLQQQISAERLQEKVGREILVIVDEVDEEGAIGRSMADAPEIDGAVYLNGETNVKPGDIVRVKVENADEYDLWGSRV.

Positions 8–118 constitute an MTTase N-terminal domain; that stretch reads PKIGFVSLGC…VLQHVHHYVP (111 aa). Residues Cys17, Cys53, Cys82, Cys150, Cys154, and Cys157 each contribute to the [4Fe-4S] cluster site. The region spanning 136 to 373 is the Radical SAM core domain; sequence LTPRHYAYLK…MQLQQQISAE (238 aa). Positions 376 to 441 constitute a TRAM domain; it reads QEKVGREILV…DEYDLWGSRV (66 aa).

This sequence belongs to the methylthiotransferase family. RimO subfamily. It depends on [4Fe-4S] cluster as a cofactor.

The protein localises to the cytoplasm. It carries out the reaction L-aspartate(89)-[ribosomal protein uS12]-hydrogen + (sulfur carrier)-SH + AH2 + 2 S-adenosyl-L-methionine = 3-methylsulfanyl-L-aspartate(89)-[ribosomal protein uS12]-hydrogen + (sulfur carrier)-H + 5'-deoxyadenosine + L-methionine + A + S-adenosyl-L-homocysteine + 2 H(+). Catalyzes the methylthiolation of an aspartic acid residue of ribosomal protein uS12. The sequence is that of Ribosomal protein uS12 methylthiotransferase RimO from Salmonella typhi.